We begin with the raw amino-acid sequence, 263 residues long: Non-functional protein STAY-GREEN, chloroplastic (263 aa).

A chloroplast-targeting transit peptide spans 1 to 54; it reads MDTLTSAPLLTSKFKPSFSPQQKPCFPHRRRFENGKKKQSIVPVARLFGPAIFE.

Belongs to the staygreen family.

Its subcellular location is the plastid. The protein localises to the chloroplast. Non-functional protein probably interfering with the disassembling mechanism of the intact light-harvesting complex of photosystem II (LHCII) in the thylakoid membranes. Responsible for a stay-green phenotype. The protein is Non-functional protein STAY-GREEN, chloroplastic (SGR) of Pisum sativum (Garden pea).